The sequence spans 69 residues: DNA gyrase inhibitor YacG (69 aa).

Residues 1–15 (MSDEPEHTAKVEPLR) are compositionally biased toward basic and acidic residues. The segment at 1–22 (MSDEPEHTAKVEPLRKPLPCPE) is disordered. Zn(2+)-binding residues include cysteine 20, cysteine 23, cysteine 35, and cysteine 39.

It belongs to the DNA gyrase inhibitor YacG family. As to quaternary structure, interacts with GyrB. Zn(2+) is required as a cofactor.

Inhibits all the catalytic activities of DNA gyrase by preventing its interaction with DNA. Acts by binding directly to the C-terminal domain of GyrB, which probably disrupts DNA binding by the gyrase. This is DNA gyrase inhibitor YacG from Allorhizobium ampelinum (strain ATCC BAA-846 / DSM 112012 / S4) (Agrobacterium vitis (strain S4)).